The following is a 160-amino-acid chain: Thebaine synthase 2 (160 aa).

S74 provides a ligand contact to thebaine. H89 serves as the catalytic Proton acceptor. T105 contacts thebaine.

It belongs to the MLP family. As to quaternary structure, homodimer (allosteric) and oligomers. Expressed in poppy latex.

The catalysed reaction is (7S)-O-acetylsalutaridinol = thebaine + acetate + H(+). It participates in alkaloid biosynthesis; morphine biosynthesis. Its activity is regulated as follows. Slightly inhibited by salutaridine and (7S)-salutaridinol. Catalyzes the formation of thebaine from (7S)-salutaridinol 7-O-acetate at the expense of labile hydroxylated by-products, which are preferentially produced by spontaneous allylic elimination. No visible activity toward (7S)-salutaridinol (at pH 7). The chain is Thebaine synthase 2 from Papaver somniferum (Opium poppy).